The chain runs to 272 residues: Diaminopimelate epimerase (272 aa).

Substrate-binding residues include asparagine 11 and asparagine 60. Cysteine 69 acts as the Proton donor in catalysis. Substrate is bound by residues 70 to 71, asparagine 181, and 199 to 200; these read GN and ER. Cysteine 209 acts as the Proton acceptor in catalysis. 210 to 211 contacts substrate; that stretch reads GT.

The protein belongs to the diaminopimelate epimerase family. Homodimer.

The protein resides in the cytoplasm. The catalysed reaction is (2S,6S)-2,6-diaminopimelate = meso-2,6-diaminopimelate. It participates in amino-acid biosynthesis; L-lysine biosynthesis via DAP pathway; DL-2,6-diaminopimelate from LL-2,6-diaminopimelate: step 1/1. Functionally, catalyzes the stereoinversion of LL-2,6-diaminopimelate (L,L-DAP) to meso-diaminopimelate (meso-DAP), a precursor of L-lysine and an essential component of the bacterial peptidoglycan. This chain is Diaminopimelate epimerase, found in Helicobacter pylori (strain P12).